We begin with the raw amino-acid sequence, 332 residues long: NH(3)-dependent NAD(+) synthetase (332 aa).

48–55 (GLSGGVDS) serves as a coordination point for ATP. Aspartate 54 contacts Mg(2+). Arginine 184 provides a ligand contact to deamido-NAD(+). Threonine 204 contributes to the ATP binding site. Glutamate 209 is a binding site for Mg(2+). Positions 217 and 224 each coordinate deamido-NAD(+). Residues lysine 233 and threonine 255 each contribute to the ATP site.

This sequence belongs to the NAD synthetase family. In terms of assembly, homodimer.

The enzyme catalyses deamido-NAD(+) + NH4(+) + ATP = AMP + diphosphate + NAD(+) + H(+). It functions in the pathway cofactor biosynthesis; NAD(+) biosynthesis; NAD(+) from deamido-NAD(+) (ammonia route): step 1/1. Its function is as follows. Catalyzes the ATP-dependent amidation of deamido-NAD to form NAD. Uses ammonia as a nitrogen source. The protein is NH(3)-dependent NAD(+) synthetase of Rhizobium rhizogenes (strain K84 / ATCC BAA-868) (Agrobacterium radiobacter).